The following is a 393-amino-acid chain: Succinate--CoA ligase [ADP-forming] subunit beta (393 aa).

An ATP-grasp domain is found at 9–237; the sequence is RDLFAKHGVP…KDAANPLEAA (229 aa). Residues K45, 52 to 54, E92, P95, and E100 contribute to the ATP site; that span reads GRG. Residues N192 and D206 each contribute to the Mg(2+) site. Residues N257 and 319–321 contribute to the substrate site; that span reads GIT.

Belongs to the succinate/malate CoA ligase beta subunit family. In terms of assembly, heterotetramer of two alpha and two beta subunits. It depends on Mg(2+) as a cofactor.

It carries out the reaction succinate + ATP + CoA = succinyl-CoA + ADP + phosphate. The enzyme catalyses GTP + succinate + CoA = succinyl-CoA + GDP + phosphate. It functions in the pathway carbohydrate metabolism; tricarboxylic acid cycle; succinate from succinyl-CoA (ligase route): step 1/1. In terms of biological role, succinyl-CoA synthetase functions in the citric acid cycle (TCA), coupling the hydrolysis of succinyl-CoA to the synthesis of either ATP or GTP and thus represents the only step of substrate-level phosphorylation in the TCA. The beta subunit provides nucleotide specificity of the enzyme and binds the substrate succinate, while the binding sites for coenzyme A and phosphate are found in the alpha subunit. This is Succinate--CoA ligase [ADP-forming] subunit beta from Streptomyces griseus subsp. griseus (strain JCM 4626 / CBS 651.72 / NBRC 13350 / KCC S-0626 / ISP 5235).